We begin with the raw amino-acid sequence, 85 residues long: MAHKKGASSSRNGRDSNAQRLGVKRFGGQVVKAGEIIVRQRGTHFHPGDGVGRGKDDTLFALQPGSVQFGTRRGRKVIDVVSVDA.

A disordered region spans residues 1 to 21 (MAHKKGASSSRNGRDSNAQRL). Over residues 7-19 (ASSSRNGRDSNAQ) the composition is skewed to polar residues.

It belongs to the bacterial ribosomal protein bL27 family.

In Beutenbergia cavernae (strain ATCC BAA-8 / DSM 12333 / CCUG 43141 / JCM 11478 / NBRC 16432 / NCIMB 13614 / HKI 0122), this protein is Large ribosomal subunit protein bL27.